A 368-amino-acid chain; its full sequence is ATP-dependent (S)-NAD(P)H-hydrate dehydratase (368 aa).

One can recognise a YjeF C-terminal domain in the interval 13–357 (LFKKVRKIVP…DEVHESFLEL (345 aa)). Residues Gly125 and 178-184 (NVNEFSR) each bind (6S)-NADPHX. Residues 231–235 (KGPHD) and 250–259 (GGLKRSGGQG) each bind ATP. Residue Asp260 coordinates (6S)-NADPHX.

The protein belongs to the NnrD/CARKD family. Requires Mg(2+) as cofactor.

The protein localises to the cytoplasm. The enzyme catalyses (6S)-NADHX + ATP = ADP + phosphate + NADH + H(+). It carries out the reaction (6S)-NADPHX + ATP = ADP + phosphate + NADPH + H(+). In terms of biological role, catalyzes the dehydration of the S-form of NAD(P)HX at the expense of ATP, which is converted to ADP. Together with NAD(P)HX epimerase, which catalyzes the epimerization of the S- and R-forms, the enzyme allows the repair of both epimers of NAD(P)HX, a damaged form of NAD(P)H that is a result of enzymatic or heat-dependent hydration. The protein is ATP-dependent (S)-NAD(P)H-hydrate dehydratase of Aspergillus fumigatus (strain ATCC MYA-4609 / CBS 101355 / FGSC A1100 / Af293) (Neosartorya fumigata).